We begin with the raw amino-acid sequence, 206 residues long: Large ribosomal subunit protein uL4 (206 aa).

A disordered region spans residues Ala-43 to Ser-78. Residues His-58 to Gly-70 are compositionally biased toward basic residues.

It belongs to the universal ribosomal protein uL4 family. Part of the 50S ribosomal subunit.

One of the primary rRNA binding proteins, this protein initially binds near the 5'-end of the 23S rRNA. It is important during the early stages of 50S assembly. It makes multiple contacts with different domains of the 23S rRNA in the assembled 50S subunit and ribosome. Its function is as follows. Forms part of the polypeptide exit tunnel. In Polynucleobacter necessarius subsp. necessarius (strain STIR1), this protein is Large ribosomal subunit protein uL4.